Here is a 328-residue protein sequence, read N- to C-terminus: Ubiquitin-conjugating enzyme E2 Z (328 aa).

The UBC core domain maps to 71–225 (QCILRIKRDI…IRHETMRVAV (155 aa)). Cys160 (glycyl thioester intermediate) is an active-site residue. Residues 295-328 (RLREKCPPEDNDGDSDSDTSSSGTDPDSQGSSQP) form a disordered region. The span at 312–328 (DTSSSGTDPDSQGSSQP) shows a compositional bias: low complexity.

It belongs to the ubiquitin-conjugating enzyme family.

The protein localises to the cytoplasm. It is found in the nucleus. The enzyme catalyses S-ubiquitinyl-[E1 ubiquitin-activating enzyme]-L-cysteine + [E2 ubiquitin-conjugating enzyme]-L-cysteine = [E1 ubiquitin-activating enzyme]-L-cysteine + S-ubiquitinyl-[E2 ubiquitin-conjugating enzyme]-L-cysteine.. Its pathway is protein modification; protein ubiquitination. Its function is as follows. Catalyzes the covalent attachment of ubiquitin to other proteins. May be involved in apoptosis regulation. In Danio rerio (Zebrafish), this protein is Ubiquitin-conjugating enzyme E2 Z (ube2z).